Reading from the N-terminus, the 663-residue chain is Drug sensory protein A (663 aa).

The next 3 membrane-spanning stretches (helical) occupy residues 32-52, 165-185, and 199-219; these read LMAA…FWAV, VFIP…GINP, and VTIA…VFNA. In terms of domain architecture, HAMP spans 220 to 272; that stretch reads LTITQPIKELLLGVKNIAAGNFKQRITLPFGGELGELIVNFNEMAERLERYEA. In terms of domain architecture, PAS spans 281-351; that stretch reads EKAKLDTLVS…QPLRELAADQ (71 aa). The Histidine kinase domain maps to 429 to 656; that stretch reads NVSHELRTPL…TFWFDLAVYQ (228 aa). Phosphohistidine; by autocatalysis is present on H432.

The protein resides in the cell membrane. It catalyses the reaction ATP + protein L-histidine = ADP + protein N-phospho-L-histidine.. In Synechocystis sp. (strain ATCC 27184 / PCC 6803 / Kazusa), this protein is Drug sensory protein A (dspA).